A 190-amino-acid polypeptide reads, in one-letter code: Threonylcarbamoyl-AMP synthase (190 aa).

Residues 7 to 190 (TGSSAAVVDL…ALTGELFRQG (184 aa)) form the YrdC-like domain.

It belongs to the SUA5 family. TsaC subfamily.

It is found in the cytoplasm. The catalysed reaction is L-threonine + hydrogencarbonate + ATP = L-threonylcarbamoyladenylate + diphosphate + H2O. Required for the formation of a threonylcarbamoyl group on adenosine at position 37 (t(6)A37) in tRNAs that read codons beginning with adenine. Catalyzes the conversion of L-threonine, HCO(3)(-)/CO(2) and ATP to give threonylcarbamoyl-AMP (TC-AMP) as the acyladenylate intermediate, with the release of diphosphate. The polypeptide is Threonylcarbamoyl-AMP synthase (Salmonella typhi).